The following is a 245-amino-acid chain: tRNA (guanine-N(1)-)-methyltransferase (245 aa).

S-adenosyl-L-methionine-binding positions include Gly-113 and 133 to 138 (IGDYVL).

It belongs to the RNA methyltransferase TrmD family. In terms of assembly, homodimer.

It localises to the cytoplasm. The enzyme catalyses guanosine(37) in tRNA + S-adenosyl-L-methionine = N(1)-methylguanosine(37) in tRNA + S-adenosyl-L-homocysteine + H(+). Specifically methylates guanosine-37 in various tRNAs. The polypeptide is tRNA (guanine-N(1)-)-methyltransferase (Actinobacillus succinogenes (strain ATCC 55618 / DSM 22257 / CCUG 43843 / 130Z)).